A 113-amino-acid polypeptide reads, in one-letter code: Putative pterin-4-alpha-carbinolamine dehydratase (113 aa).

This sequence belongs to the pterin-4-alpha-carbinolamine dehydratase family.

The catalysed reaction is (4aS,6R)-4a-hydroxy-L-erythro-5,6,7,8-tetrahydrobiopterin = (6R)-L-erythro-6,7-dihydrobiopterin + H2O. This Nitrosomonas europaea (strain ATCC 19718 / CIP 103999 / KCTC 2705 / NBRC 14298) protein is Putative pterin-4-alpha-carbinolamine dehydratase.